The primary structure comprises 253 residues: Electron transfer flavoprotein subunit beta, mitochondrial (253 aa).

The protein belongs to the ETF beta-subunit/FixA family. In terms of assembly, heterodimer of an alpha and a beta subunit. FAD is required as a cofactor. AMP serves as cofactor.

Its subcellular location is the mitochondrion matrix. In terms of biological role, the electron transfer flavoprotein serves as a specific electron acceptor for several dehydrogenases, including five acyl-CoA dehydrogenases, glutaryl-CoA and sarcosine dehydrogenase. It transfers the electrons to the main mitochondrial respiratory chain via ETF-ubiquinone oxidoreductase (ETF dehydrogenase). In Oryza sativa subsp. japonica (Rice), this protein is Electron transfer flavoprotein subunit beta, mitochondrial (ETFB).